Here is a 291-residue protein sequence, read N- to C-terminus: tRNA U34 carboxymethyltransferase (291 aa).

Residues K61, W75, K80, G100, D122–S124, V149–E150, Y169, and R284 each bind carboxy-S-adenosyl-L-methionine.

The protein belongs to the class I-like SAM-binding methyltransferase superfamily. CmoB family. Homotetramer.

The enzyme catalyses carboxy-S-adenosyl-L-methionine + 5-hydroxyuridine(34) in tRNA = 5-carboxymethoxyuridine(34) in tRNA + S-adenosyl-L-homocysteine + H(+). Catalyzes carboxymethyl transfer from carboxy-S-adenosyl-L-methionine (Cx-SAM) to 5-hydroxyuridine (ho5U) to form 5-carboxymethoxyuridine (cmo5U) at position 34 in tRNAs. The polypeptide is tRNA U34 carboxymethyltransferase (Campylobacter jejuni subsp. jejuni serotype O:2 (strain ATCC 700819 / NCTC 11168)).